The following is a 774-amino-acid chain: Lysyl oxidase homolog 2 (774 aa).

Positions Met-1 to Ala-25 are cleaved as a signal peptide. SRCR domains are found at residues Leu-58–Ser-159, Ile-188–Val-302, Val-326–Asn-425, and Leu-435–Ser-544. Disulfide bonds link Cys-84/Cys-148, Cys-97/Cys-158, Cys-128/Cys-138, Cys-218/Cys-291, Cys-231/Cys-301, Cys-265/Cys-275, Cys-351/Cys-414, Cys-364/Cys-424, and Cys-395/Cys-405. Asn-288 carries an N-linked (GlcNAc...) asparagine glycan. An N-linked (GlcNAc...) asparagine glycan is attached at Asn-455. Cystine bridges form between Cys-464–Cys-530, Cys-477–Cys-543, and Cys-511–Cys-521. Positions Pro-548–Ser-751 are lysyl-oxidase like. Ca(2+)-binding residues include Asp-549 and Leu-550. 4 cysteine pairs are disulfide-bonded: Cys-573–Cys-625, Cys-579–Cys-695, Cys-657–Cys-673, and Cys-663–Cys-685. Cu cation is bound by residues His-626, His-628, and His-630. The N-linked (GlcNAc...) asparagine glycan is linked to Asn-644. The segment at residues Lys-653–Tyr-689 is a cross-link (lysine tyrosylquinone (Lys-Tyr)). Tyr-689 carries the post-translational modification 2',4',5'-topaquinone. Positions 722, 724, 727, and 728 each coordinate Ca(2+). The cysteines at positions 732 and 746 are disulfide-linked.

The protein belongs to the lysyl oxidase family. Component of some chromatin repressor complex. Interacts with SNAI1. Interacts with TAF10. Interacts with HSPA5. Interacts with EFEMP2. Cu cation serves as cofactor. The cofactor is lysine tyrosylquinone residue. The lysine tyrosylquinone cross-link (LTQ) is generated by condensation of the epsilon-amino group of a lysine with a topaquinone produced by oxidation of tyrosine. In terms of processing, N-glycosylated. N-glycosylation on Asn-455 and Asn-644 may be essential for proper folding and secretion; may be composed of a fucosylated carbohydrates attached to a trimannose N-linked glycan core.

It is found in the secreted. The protein resides in the extracellular space. The protein localises to the extracellular matrix. Its subcellular location is the basement membrane. It localises to the nucleus. It is found in the chromosome. The protein resides in the endoplasmic reticulum. The catalysed reaction is L-lysyl-[protein] + O2 + H2O = (S)-2-amino-6-oxohexanoyl-[protein] + H2O2 + NH4(+). With respect to regulation, specifically inhibited by a mouse monoclonal antibody AB0023, inhibition occurs in a non-competitive manner. Mediates the post-translational oxidative deamination of lysine residues on target proteins leading to the formation of deaminated lysine (allysine). Acts as a transcription corepressor and specifically mediates deamination of trimethylated 'Lys-4' of histone H3 (H3K4me3), a specific tag for epigenetic transcriptional activation. Shows no activity against histone H3 when it is trimethylated on 'Lys-9' (H3K9me3) or 'Lys-27' (H3K27me3) or when 'Lys-4' is monomethylated (H3K4me1) or dimethylated (H3K4me2). Also mediates deamination of methylated TAF10, a member of the transcription factor IID (TFIID) complex, which induces release of TAF10 from promoters, leading to inhibition of TFIID-dependent transcription. LOXL2-mediated deamination of TAF10 results in transcriptional repression of genes required for embryonic stem cell pluripotency including POU5F1/OCT4, NANOG, KLF4 and SOX2. Involved in epithelial to mesenchymal transition (EMT) via interaction with SNAI1 and participates in repression of E-cadherin CDH1, probably by mediating deamination of histone H3. During EMT, involved with SNAI1 in negatively regulating pericentromeric heterochromatin transcription. SNAI1 recruits LOXL2 to pericentromeric regions to oxidize histone H3 and repress transcription which leads to release of heterochromatin component CBX5/HP1A, enabling chromatin reorganization and acquisition of mesenchymal traits. Interacts with the endoplasmic reticulum protein HSPA5 which activates the IRE1-XBP1 pathway of the unfolded protein response, leading to expression of several transcription factors involved in EMT and subsequent EMT induction. When secreted into the extracellular matrix, promotes cross-linking of extracellular matrix proteins by mediating oxidative deamination of peptidyl lysine residues in precursors to fibrous collagen and elastin. Acts as a regulator of sprouting angiogenesis, probably via collagen IV scaffolding. Acts as a regulator of chondrocyte differentiation, probably by regulating expression of factors that control chondrocyte differentiation. In Pongo abelii (Sumatran orangutan), this protein is Lysyl oxidase homolog 2 (LOXL2).